Consider the following 255-residue polypeptide: MIQISALPAFTDNYIWLLQDPHTQRCAVVDPGDAAPVLDWLEQNPGWALSDILVTHHHHDHVGGVEQLKGATNAKVYGPANEKIPARDVALNDNDRITVLGWDFDIYTVPGHTLGHITFYHSGVLLCGDTLFAAGCGRLFEGTPEQMYTSLERLAALPADTRVYCTHEYTQSNLKFAQAVEPDNADIAERVESVRQLRARGEITLPSNLALERLTNPFLRTSETSVKQKADERNGRDNRSGAEVFASLRAWKDKF.

Zn(2+) contacts are provided by histidine 56, histidine 58, aspartate 60, histidine 61, histidine 112, aspartate 129, and histidine 167.

The protein belongs to the metallo-beta-lactamase superfamily. Glyoxalase II family. As to quaternary structure, monomer. The cofactor is Zn(2+).

The enzyme catalyses an S-(2-hydroxyacyl)glutathione + H2O = a 2-hydroxy carboxylate + glutathione + H(+). Its pathway is secondary metabolite metabolism; methylglyoxal degradation; (R)-lactate from methylglyoxal: step 2/2. Thiolesterase that catalyzes the hydrolysis of S-D-lactoyl-glutathione to form glutathione and D-lactic acid. This Pseudomonas fluorescens (strain SBW25) protein is Hydroxyacylglutathione hydrolase.